A 341-amino-acid polypeptide reads, in one-letter code: Glycerol-3-phosphate dehydrogenase [NAD(P)+] 1 (341 aa).

Residues Ser11, Trp12, Arg32, Arg33, and Lys106 each contribute to the NADPH site. Residues Lys106, Gly137, and Ser139 each coordinate sn-glycerol 3-phosphate. An NADPH-binding site is contributed by Ala141. Sn-glycerol 3-phosphate-binding residues include Lys192, Asp245, Ser255, Arg256, and Asn257. Lys192 (proton acceptor) is an active-site residue. Arg256 is an NADPH binding site. NADPH contacts are provided by Val280 and Glu282.

This sequence belongs to the NAD-dependent glycerol-3-phosphate dehydrogenase family.

It is found in the cytoplasm. The enzyme catalyses sn-glycerol 3-phosphate + NAD(+) = dihydroxyacetone phosphate + NADH + H(+). The catalysed reaction is sn-glycerol 3-phosphate + NADP(+) = dihydroxyacetone phosphate + NADPH + H(+). Its pathway is membrane lipid metabolism; glycerophospholipid metabolism. In terms of biological role, catalyzes the reduction of the glycolytic intermediate dihydroxyacetone phosphate (DHAP) to sn-glycerol 3-phosphate (G3P), the key precursor for phospholipid synthesis. The sequence is that of Glycerol-3-phosphate dehydrogenase [NAD(P)+] 1 from Salinibacter ruber (strain DSM 13855 / M31).